The chain runs to 456 residues: Ribosome assembly protein METTL17, mitochondrial (456 aa).

The N-terminal 19 residues, 1 to 19, are a transit peptide targeting the mitochondrion; the sequence is MAAALKCLLTLGRWCPGLG. [4Fe-4S] cluster-binding residues include cysteine 333, cysteine 339, cysteine 347, and cysteine 404.

The protein belongs to the methyltransferase superfamily. Rsm22 family. Associates with the mitochondrial ribosome (mitoribosome).

It localises to the mitochondrion matrix. Its function is as follows. Mitochondrial ribosome (mitoribosome) assembly factor. Binds at the interface of the head and body domains of the mitochondrial small ribosomal subunit (mt-SSU), occluding the mRNA channel and preventing compaction of the head domain towards the body. Probable inactive methyltransferase: retains the characteristic folding and ability to bind S-adenosyl-L-methionine, but it probably lost its methyltransferase activity. In Homo sapiens (Human), this protein is Ribosome assembly protein METTL17, mitochondrial.